Reading from the N-terminus, the 231-residue chain is Ferredoxin-type protein NapG (231 aa).

Positions 1–41 (MSRSAKPQNGRRRFLRDVVRTAGGLAAVGVALGLQQQTARA) form a signal peptide, tat-type signal. 4 4Fe-4S ferredoxin-type domains span residues 50–81 (GAIN…LATL), 89–121 (TPYF…REIE), 130–166 (LAVL…LELE), and 177–208 (FLPT…VLPL). [4Fe-4S] cluster contacts are provided by C61, C64, C67, C71, C99, C102, C107, C111, C139, C147, C150, C154, C186, C189, C192, and C196.

The cofactor is [4Fe-4S] cluster. In terms of processing, exported by the Tat system. The position of the signal peptide cleavage has not been experimentally proven.

The protein resides in the periplasm. Functionally, required for electron transfer from ubiquinol, via NapC, to the periplasmic nitrate reductase NapAB complex. This Escherichia coli (strain K12) protein is Ferredoxin-type protein NapG (napG).